The chain runs to 118 residues: uncharacterized protein (118 aa).

It belongs to the HesB/IscA family. Ycf83 subfamily.

This is an uncharacterized protein from Synechocystis sp. (strain ATCC 27184 / PCC 6803 / Kazusa).